A 274-amino-acid polypeptide reads, in one-letter code: Nitrate import ATP-binding protein NrtD (274 aa).

Positions Leu-17–Glu-250 constitute an ABC transporter domain. Residue Gly-53 to Ser-60 coordinates ATP.

This sequence belongs to the ABC transporter superfamily. Nitrate/nitrite/cyanate uptake transporter (NitT) (TC 3.A.1.16) family. As to quaternary structure, the complex is composed of two ATP-binding proteins (NrtC and NrtD), two transmembrane proteins (NrtB) and a solute-binding protein (NrtA).

The protein resides in the cell inner membrane. The enzyme catalyses nitrate(out) + ATP + H2O = nitrate(in) + ADP + phosphate + H(+). Its function is as follows. Part of the ABC transporter complex NrtABCD involved in nitrate uptake. The complex is probably also involved in nitrite transport. Probably responsible for energy coupling to the transport system. The protein is Nitrate import ATP-binding protein NrtD of Synechococcus elongatus (strain ATCC 33912 / PCC 7942 / FACHB-805) (Anacystis nidulans R2).